The primary structure comprises 304 residues: tRNA-uridine aminocarboxypropyltransferase 1 (304 aa).

The interval 1 to 30 (MALSPSVVPQESEENNANCVETKQSQTAST) is disordered. Positions 15-30 (NNANCVETKQSQTAST) are enriched in polar residues. The DXTW signature appears at 206-209 (DSTW).

Belongs to the TDD superfamily. DTWD1 family.

The protein localises to the nucleus. The catalysed reaction is a uridine in tRNA + S-adenosyl-L-methionine = a 3-[(3S)-3-amino-3-carboxypropyl]uridine in tRNA + S-methyl-5'-thioadenosine + H(+). Catalyzes the formation of 3-(3-amino-3-carboxypropyl)uridine (acp3U) at position 20 in the D-loop of several cytoplasmic tRNAs (acp3U(20)). This Rattus norvegicus (Rat) protein is tRNA-uridine aminocarboxypropyltransferase 1.